Here is a 208-residue protein sequence, read N- to C-terminus: Component of Sp100-rs (208 aa).

The HSR domain maps to 6–121 (GSPRMSTEQE…LRRSFECGAK (116 aa)).

The protein is Component of Sp100-rs (Csprs) of Mus musculus (Mouse).